The following is a 307-amino-acid chain: Probable deoxyhypusine synthase (307 aa).

The active-site Nucleophile is lysine 278.

Belongs to the deoxyhypusine synthase family. NAD(+) serves as cofactor.

The enzyme catalyses [eIF5A protein]-L-lysine + spermidine = [eIF5A protein]-deoxyhypusine + propane-1,3-diamine. It functions in the pathway protein modification; eIF5A hypusination. In terms of biological role, catalyzes the NAD-dependent oxidative cleavage of spermidine and the subsequent transfer of the butylamine moiety of spermidine to the epsilon-amino group of a specific lysine residue of the eIF-5A precursor protein to form the intermediate deoxyhypusine residue. The polypeptide is Probable deoxyhypusine synthase (dys) (Methanothermobacter thermautotrophicus (strain ATCC 29096 / DSM 1053 / JCM 10044 / NBRC 100330 / Delta H) (Methanobacterium thermoautotrophicum)).